Reading from the N-terminus, the 364-residue chain is Aminomethyltransferase (364 aa).

It belongs to the GcvT family. The glycine cleavage system is composed of four proteins: P, T, L and H.

The catalysed reaction is N(6)-[(R)-S(8)-aminomethyldihydrolipoyl]-L-lysyl-[protein] + (6S)-5,6,7,8-tetrahydrofolate = N(6)-[(R)-dihydrolipoyl]-L-lysyl-[protein] + (6R)-5,10-methylene-5,6,7,8-tetrahydrofolate + NH4(+). Functionally, the glycine cleavage system catalyzes the degradation of glycine. The protein is Aminomethyltransferase of Shewanella piezotolerans (strain WP3 / JCM 13877).